The chain runs to 88 residues: Small ribosomal subunit protein uS15 (88 aa).

A compositionally biased stretch (polar residues) spans 1–12 (MLTNTDRQQVIA). Residues 1–23 (MLTNTDRQQVIAQYQRAPGDTGS) form a disordered region.

The protein belongs to the universal ribosomal protein uS15 family. In terms of assembly, part of the 30S ribosomal subunit. Forms a bridge to the 50S subunit in the 70S ribosome, contacting the 23S rRNA.

Its function is as follows. One of the primary rRNA binding proteins, it binds directly to 16S rRNA where it helps nucleate assembly of the platform of the 30S subunit by binding and bridging several RNA helices of the 16S rRNA. Functionally, forms an intersubunit bridge (bridge B4) with the 23S rRNA of the 50S subunit in the ribosome. In Psychrobacter sp. (strain PRwf-1), this protein is Small ribosomal subunit protein uS15.